We begin with the raw amino-acid sequence, 574 residues long: Septation ring formation regulator EzrA (574 aa).

The Extracellular segment spans residues 1-7; the sequence is MSSGIIL. A helical transmembrane segment spans residues 8 to 26; sequence LIVAIVLLVIIAYLVGVII. At 27–574 the chain is on the cytoplasmic side; sequence RKRNDSLITS…YEKTREHIRF (548 aa). Coiled-coil stretches lie at residues 102–141, 274–350, and 459–520; these read NFIRAKHEINSVESQLNLVEEDIASIREALNILKEQEEKN, ELVT…ETES, and QLEA…SFEA.

Belongs to the EzrA family.

It localises to the cell membrane. Negative regulator of FtsZ ring formation; modulates the frequency and position of FtsZ ring formation. Inhibits FtsZ ring formation at polar sites. Interacts either with FtsZ or with one of its binding partners to promote depolymerization. The protein is Septation ring formation regulator EzrA of Streptococcus pyogenes serotype M1.